Reading from the N-terminus, the 211-residue chain is Probable cytokinin riboside 5'-monophosphate phosphoribohydrolase LOGL3 (211 aa).

Residues glutamate 84, 102–103 (RK), 119–125 (GYGTLEE), and threonine 131 each bind substrate.

It belongs to the LOG family. In terms of tissue distribution, expressed in roots, leaves, stems, tiller buds, shoot apex, immature inflorescences and flowers.

It catalyses the reaction N(6)-(dimethylallyl)adenosine 5'-phosphate + H2O = N(6)-dimethylallyladenine + D-ribose 5-phosphate. It carries out the reaction 9-ribosyl-trans-zeatin 5'-phosphate + H2O = trans-zeatin + D-ribose 5-phosphate. In terms of biological role, cytokinin-activating enzyme working in the direct activation pathway. Phosphoribohydrolase that converts inactive cytokinin nucleotides to the biologically active free-base forms. The chain is Probable cytokinin riboside 5'-monophosphate phosphoribohydrolase LOGL3 (LOGL3) from Oryza sativa subsp. japonica (Rice).